The following is a 170-amino-acid chain: NADH-quinone oxidoreductase subunit B (170 aa).

[4Fe-4S] cluster contacts are provided by Cys-37, Cys-38, Cys-102, and Cys-131.

The protein belongs to the complex I 20 kDa subunit family. NDH-1 is composed of 14 different subunits. Subunits NuoB, C, D, E, F, and G constitute the peripheral sector of the complex. [4Fe-4S] cluster serves as cofactor.

The protein localises to the cell inner membrane. It catalyses the reaction a quinone + NADH + 5 H(+)(in) = a quinol + NAD(+) + 4 H(+)(out). Functionally, NDH-1 shuttles electrons from NADH, via FMN and iron-sulfur (Fe-S) centers, to quinones in the respiratory chain. The immediate electron acceptor for the enzyme in this species is believed to be ubiquinone. Couples the redox reaction to proton translocation (for every two electrons transferred, four hydrogen ions are translocated across the cytoplasmic membrane), and thus conserves the redox energy in a proton gradient. This chain is NADH-quinone oxidoreductase subunit B, found in Citrifermentans bemidjiense (strain ATCC BAA-1014 / DSM 16622 / JCM 12645 / Bem) (Geobacter bemidjiensis).